Here is a 309-residue protein sequence, read N- to C-terminus: Foldase protein PrsA (309 aa).

The signal sequence occupies residues 1–20 (MKKKIVAGAVTLLSVAVLAA). Cys21 is lipidated: N-palmitoyl cysteine. Residue Cys21 is the site of S-diacylglycerol cysteine attachment. The 98-residue stretch at 144 to 241 (TPEVTAQIIK…ASYYIVKLVS (98 aa)) folds into the PpiC domain.

It belongs to the PrsA family.

Its subcellular location is the cell membrane. The enzyme catalyses [protein]-peptidylproline (omega=180) = [protein]-peptidylproline (omega=0). Functionally, plays a major role in protein secretion by helping the post-translocational extracellular folding of several secreted proteins. In Streptococcus gordonii (strain Challis / ATCC 35105 / BCRC 15272 / CH1 / DL1 / V288), this protein is Foldase protein PrsA.